Reading from the N-terminus, the 131-residue chain is Outer membrane protein assembly factor BamE (131 aa).

The N-terminal stretch at 1–16 is a signal peptide; sequence MRNLLLVAAVALSTAG. C17 carries the N-palmitoyl cysteine lipid modification. C17 carries the S-diacylglycerol cysteine lipid modification. Positions 112–131 are disordered; that stretch reads SAPKQFGRNLARDKKKQRGR.

Belongs to the BamE family. In terms of assembly, part of the Bam complex.

The protein resides in the cell outer membrane. Functionally, part of the outer membrane protein assembly complex, which is involved in assembly and insertion of beta-barrel proteins into the outer membrane. This is Outer membrane protein assembly factor BamE from Xanthomonas campestris pv. campestris (strain ATCC 33913 / DSM 3586 / NCPPB 528 / LMG 568 / P 25).